We begin with the raw amino-acid sequence, 135 residues long: Ribonuclease VapC9 (135 aa).

One can recognise a PINc domain in the interval 15–118 (VVDTNVLMYV…LKRKAKQRGI (104 aa)). Mg(2+) is bound by residues aspartate 17 and aspartate 88.

The protein belongs to the PINc/VapC protein family. As to quaternary structure, dimer. It depends on Mg(2+) as a cofactor.

Functionally, toxic component of a type II toxin-antitoxin (TA) system. An RNase. The sequence is that of Ribonuclease VapC9 from Archaeoglobus fulgidus (strain ATCC 49558 / DSM 4304 / JCM 9628 / NBRC 100126 / VC-16).